Here is a 239-residue protein sequence, read N- to C-terminus: 2,3,4,5-tetrahydropyridine-2,6-dicarboxylate N-acetyltransferase (239 aa).

The protein belongs to the transferase hexapeptide repeat family. DapH subfamily.

It carries out the reaction (S)-2,3,4,5-tetrahydrodipicolinate + acetyl-CoA + H2O = L-2-acetamido-6-oxoheptanedioate + CoA. It functions in the pathway amino-acid biosynthesis; L-lysine biosynthesis via DAP pathway; LL-2,6-diaminopimelate from (S)-tetrahydrodipicolinate (acetylase route): step 1/3. In terms of biological role, catalyzes the transfer of an acetyl group from acetyl-CoA to tetrahydrodipicolinate. The chain is 2,3,4,5-tetrahydropyridine-2,6-dicarboxylate N-acetyltransferase from Staphylococcus carnosus (strain TM300).